A 154-amino-acid chain; its full sequence is 6,7-dimethyl-8-ribityllumazine synthase (154 aa).

Residues Phe22, 56 to 58 (AFE), and 81 to 83 (VLI) contribute to the 5-amino-6-(D-ribitylamino)uracil site. 86–87 (ET) contributes to the (2S)-2-hydroxy-3-oxobutyl phosphate binding site. His89 serves as the catalytic Proton donor. Residue Leu114 coordinates 5-amino-6-(D-ribitylamino)uracil. Position 128 (Arg128) interacts with (2S)-2-hydroxy-3-oxobutyl phosphate.

This sequence belongs to the DMRL synthase family.

The enzyme catalyses (2S)-2-hydroxy-3-oxobutyl phosphate + 5-amino-6-(D-ribitylamino)uracil = 6,7-dimethyl-8-(1-D-ribityl)lumazine + phosphate + 2 H2O + H(+). It functions in the pathway cofactor biosynthesis; riboflavin biosynthesis; riboflavin from 2-hydroxy-3-oxobutyl phosphate and 5-amino-6-(D-ribitylamino)uracil: step 1/2. Its function is as follows. Catalyzes the formation of 6,7-dimethyl-8-ribityllumazine by condensation of 5-amino-6-(D-ribitylamino)uracil with 3,4-dihydroxy-2-butanone 4-phosphate. This is the penultimate step in the biosynthesis of riboflavin. This Chlamydia pneumoniae (Chlamydophila pneumoniae) protein is 6,7-dimethyl-8-ribityllumazine synthase.